Here is a 154-residue protein sequence, read N- to C-terminus: Large ribosomal subunit protein uL13 (154 aa).

The protein belongs to the universal ribosomal protein uL13 family. Part of the 50S ribosomal subunit.

Functionally, this protein is one of the early assembly proteins of the 50S ribosomal subunit, although it is not seen to bind rRNA by itself. It is important during the early stages of 50S assembly. The protein is Large ribosomal subunit protein uL13 of Rhizobium leguminosarum bv. trifolii (strain WSM2304).